Reading from the N-terminus, the 143-residue chain is Transcriptional regulator MraZ (143 aa).

SpoVT-AbrB domains lie at 5–47 (SHTP…PLAE) and 76–119 (ASDD…DSQR).

Belongs to the MraZ family. As to quaternary structure, forms oligomers.

The protein resides in the cytoplasm. It is found in the nucleoid. This chain is Transcriptional regulator MraZ, found in Parafrankia sp. (strain EAN1pec).